The chain runs to 211 residues: Peptide methionine sulfoxide reductase MsrA (211 aa).

Cys-52 is an active-site residue.

This sequence belongs to the MsrA Met sulfoxide reductase family.

The enzyme catalyses L-methionyl-[protein] + [thioredoxin]-disulfide + H2O = L-methionyl-(S)-S-oxide-[protein] + [thioredoxin]-dithiol. The catalysed reaction is [thioredoxin]-disulfide + L-methionine + H2O = L-methionine (S)-S-oxide + [thioredoxin]-dithiol. Has an important function as a repair enzyme for proteins that have been inactivated by oxidation. Catalyzes the reversible oxidation-reduction of methionine sulfoxide in proteins to methionine. The protein is Peptide methionine sulfoxide reductase MsrA of Klebsiella pneumoniae (strain 342).